Consider the following 75-residue polypeptide: DNA-directed RNA polymerase subunit omega (75 aa).

This sequence belongs to the RNA polymerase subunit omega family. In cyanobacteria the RNAP catalytic core is composed of 2 alpha, 1 beta, 1 beta', 1 gamma and 1 omega subunit. When a sigma factor is associated with the core the holoenzyme is formed, which can initiate transcription.

The catalysed reaction is RNA(n) + a ribonucleoside 5'-triphosphate = RNA(n+1) + diphosphate. Functionally, promotes RNA polymerase assembly. Latches the N- and C-terminal regions of the beta' subunit thereby facilitating its interaction with the beta and alpha subunits. The sequence is that of DNA-directed RNA polymerase subunit omega from Prochlorococcus marinus (strain MIT 9313).